The chain runs to 104 residues: Phosphoribosyl-ATP pyrophosphatase (104 aa).

The protein belongs to the PRA-PH family.

The protein resides in the cytoplasm. The catalysed reaction is 1-(5-phospho-beta-D-ribosyl)-ATP + H2O = 1-(5-phospho-beta-D-ribosyl)-5'-AMP + diphosphate + H(+). Its pathway is amino-acid biosynthesis; L-histidine biosynthesis; L-histidine from 5-phospho-alpha-D-ribose 1-diphosphate: step 2/9. The sequence is that of Phosphoribosyl-ATP pyrophosphatase (hisE) from Methanosarcina acetivorans (strain ATCC 35395 / DSM 2834 / JCM 12185 / C2A).